The primary structure comprises 506 residues: Bifunctional purine biosynthesis protein PurH (506 aa).

The MGS-like domain occupies methionine 1 to cysteine 146.

It belongs to the PurH family.

It catalyses the reaction (6R)-10-formyltetrahydrofolate + 5-amino-1-(5-phospho-beta-D-ribosyl)imidazole-4-carboxamide = 5-formamido-1-(5-phospho-D-ribosyl)imidazole-4-carboxamide + (6S)-5,6,7,8-tetrahydrofolate. The enzyme catalyses IMP + H2O = 5-formamido-1-(5-phospho-D-ribosyl)imidazole-4-carboxamide. The protein operates within purine metabolism; IMP biosynthesis via de novo pathway; 5-formamido-1-(5-phospho-D-ribosyl)imidazole-4-carboxamide from 5-amino-1-(5-phospho-D-ribosyl)imidazole-4-carboxamide (10-formyl THF route): step 1/1. It participates in purine metabolism; IMP biosynthesis via de novo pathway; IMP from 5-formamido-1-(5-phospho-D-ribosyl)imidazole-4-carboxamide: step 1/1. In Trichormus variabilis (strain ATCC 29413 / PCC 7937) (Anabaena variabilis), this protein is Bifunctional purine biosynthesis protein PurH.